We begin with the raw amino-acid sequence, 389 residues long: S-adenosylmethionine synthase (389 aa).

An ATP-binding site is contributed by His-16. Residue Asp-18 participates in Mg(2+) binding. Glu-44 is a K(+) binding site. Residues Glu-57 and Gln-101 each coordinate L-methionine. Residues 101–111 (QSVDIAQGVNE) form a flexible loop region. ATP-binding positions include 168-170 (DAK), 234-235 (RF), Asp-243, 249-250 (RK), Ala-266, and Lys-270. Asp-243 serves as a coordination point for L-methionine. L-methionine is bound at residue Lys-274.

This sequence belongs to the AdoMet synthase family. In terms of assembly, homotetramer; dimer of dimers. It depends on Mg(2+) as a cofactor. K(+) serves as cofactor.

The protein resides in the cytoplasm. It carries out the reaction L-methionine + ATP + H2O = S-adenosyl-L-methionine + phosphate + diphosphate. It participates in amino-acid biosynthesis; S-adenosyl-L-methionine biosynthesis; S-adenosyl-L-methionine from L-methionine: step 1/1. Functionally, catalyzes the formation of S-adenosylmethionine (AdoMet) from methionine and ATP. The overall synthetic reaction is composed of two sequential steps, AdoMet formation and the subsequent tripolyphosphate hydrolysis which occurs prior to release of AdoMet from the enzyme. The polypeptide is S-adenosylmethionine synthase (Magnetococcus marinus (strain ATCC BAA-1437 / JCM 17883 / MC-1)).